The chain runs to 24 residues: Frenatin-4 (24 aa).

In terms of tissue distribution, expressed by the skin glands.

It localises to the secreted. Functionally, very weak antimicrobial peptide since it does not show activity below 100 ug/ml against Bacillus cereus, Escherichia coli, Leuconostoc mesenteroides, Micrococcus luteus, Pastewella haemolytica, Staphylococcus aureus, Streptococcus faecalis and Streptococcus uberis. The protein is Frenatin-4 of Nyctimystes infrafrenatus (White-lipped tree frog).